Here is a 388-residue protein sequence, read N- to C-terminus: MNLHEYQAKQLFARYGLPAPVGYACTTPREAEEAASKIGAGPWGVKCQVHAGGRGKAGGVKVVNSKEDIRAFAENWLGKRLVTYQTDANGQPVNQILVEAATDIAKELYLGAVVDRSSRRVVFMASTEGGVEIEKVAEETPHLIHKVALDPLTGPMPYQGRELAFKLGLEGKLVQQFTKIFMGLATIFLERDLALIEINPLVITKQGDLICLDGKLGADGNALFRQPDLREMRDQSQEDPREAQAAQWELNYVALDGNIGCMVNGAGLAMGTMDIVKLHGGEPANFLDVGGGATKERVTEAFKIILSDDKVKAVLVNIFGGIVRCDLIADGIIGAVAEVGVNVPVVVRLEGNNAELGAKKLADSGLNIIAAKGLTDAAQQVVAAVEGK.

An ATP-grasp domain is found at 9–244; sequence KQLFARYGLP…QSQEDPREAQ (236 aa). ATP-binding positions include Lys46, 53–55, Glu99, Thr102, and Glu107; that span reads GRG. Mg(2+) contacts are provided by Asn199 and Asp213. Substrate contacts are provided by residues Asn264 and 321–323; that span reads GIV.

The protein belongs to the succinate/malate CoA ligase beta subunit family. In terms of assembly, heterotetramer of two alpha and two beta subunits. Requires Mg(2+) as cofactor.

It catalyses the reaction succinate + ATP + CoA = succinyl-CoA + ADP + phosphate. The enzyme catalyses GTP + succinate + CoA = succinyl-CoA + GDP + phosphate. Its pathway is carbohydrate metabolism; tricarboxylic acid cycle; succinate from succinyl-CoA (ligase route): step 1/1. Its function is as follows. Succinyl-CoA synthetase functions in the citric acid cycle (TCA), coupling the hydrolysis of succinyl-CoA to the synthesis of either ATP or GTP and thus represents the only step of substrate-level phosphorylation in the TCA. The beta subunit provides nucleotide specificity of the enzyme and binds the substrate succinate, while the binding sites for coenzyme A and phosphate are found in the alpha subunit. This chain is Succinate--CoA ligase [ADP-forming] subunit beta, found in Shigella dysenteriae serotype 1 (strain Sd197).